Here is a 436-residue protein sequence, read N- to C-terminus: GTPase Der (436 aa).

EngA-type G domains lie at 4 to 167 (PVVA…PKRG) and 176 to 351 (IKFC…ENHA). GTP-binding positions include 10 to 17 (GRPNVGKS), 57 to 61 (DTGGI), 119 to 122 (NKID), 182 to 189 (GRPNVGKS), 229 to 233 (DTAGM), and 294 to 297 (NKWD). Residues 352-436 (MRVQTNVLNE…PIKIIARPRK (85 aa)) enclose the KH-like domain.

Belongs to the TRAFAC class TrmE-Era-EngA-EngB-Septin-like GTPase superfamily. EngA (Der) GTPase family. In terms of assembly, associates with the 50S ribosomal subunit.

Its function is as follows. GTPase that plays an essential role in the late steps of ribosome biogenesis. The sequence is that of GTPase Der from Geobacillus sp. (strain WCH70).